Reading from the N-terminus, the 276-residue chain is Large ribosomal subunit protein uL2 (276 aa).

2 disordered regions span residues 30 to 57 (EKSL…QGGG) and 219 to 276 (TVRG…RSKK).

It belongs to the universal ribosomal protein uL2 family. As to quaternary structure, part of the 50S ribosomal subunit. Forms a bridge to the 30S subunit in the 70S ribosome.

In terms of biological role, one of the primary rRNA binding proteins. Required for association of the 30S and 50S subunits to form the 70S ribosome, for tRNA binding and peptide bond formation. It has been suggested to have peptidyltransferase activity; this is somewhat controversial. Makes several contacts with the 16S rRNA in the 70S ribosome. The chain is Large ribosomal subunit protein uL2 from Exiguobacterium sibiricum (strain DSM 17290 / CCUG 55495 / CIP 109462 / JCM 13490 / 255-15).